We begin with the raw amino-acid sequence, 932 residues long: Protocadherin gamma-A9 (932 aa).

The signal sequence occupies residues 1-28; sequence MAAPTKCQLRGRLVLLCSLLGMLWEARA. Cadherin domains follow at residues 29–133, 134–242, 243–347, 348–452, 453–562, and 570–683; these read SQIR…APKF, QAES…APVF, AQRI…RPEV, TITS…PPAF, SQAS…APEI, and DGST…IPAD. The Extracellular portion of the chain corresponds to 29 to 692; sequence SQIRYSVPEE…DLEASDLTLY (664 aa). Residues N47 and N127 are each glycosylated (N-linked (GlcNAc...) asparagine). Residues N389, N419, and N545 are each glycosylated (N-linked (GlcNAc...) asparagine). Residues 693-713 form a helical membrane-spanning segment; the sequence is LVVAVAVVSCVFLTFVITLLA. Residues 714-932 lie on the Cytoplasmic side of the membrane; it reads LRLRHWHSSH…KKKSGKKEKK (219 aa). Disordered stretches follow at residues 803–841 and 902–932; these read DTPL…WPNN and ATLT…KEKK. Polar residues predominate over residues 816 to 841; that stretch reads WRFSQAQRPGTSGSQNGDDTGTWPNN. Basic residues predominate over residues 922 to 932; sequence NKKKSGKKEKK.

It localises to the cell membrane. In terms of biological role, potential calcium-dependent cell-adhesion protein. May be involved in the establishment and maintenance of specific neuronal connections in the brain. This Homo sapiens (Human) protein is Protocadherin gamma-A9 (PCDHGA9).